Reading from the N-terminus, the 239-residue chain is MKPVILATASALLLAACQTNSYDSLAYGPTLTPVGQGLEAGRMPVPQPFQQAKERTFRSAYNLNSQSMYRALRAAAVGDVIRITIDIDDKAQLDNNTNRSRKSASDVGFASALNLSGFQSGSTSGSASGNLGLTGDTSTDGKGKIDRSEKLRLSLAAVVTEVMPNGNLVINGSQEILVNYEVRVLTLGGIVNPLDVTSNNTVAYDKVAEARISYAGRGRLNDVQQPAWGQRLFDAVNPM.

Positions 1–16 (MKPVILATASALLLAA) are cleaved as a signal peptide. A lipid anchor (N-palmitoyl cysteine) is attached at Cys-17. Cys-17 carries S-diacylglycerol cysteine lipidation. The span at 120-138 (SGSTSGSASGNLGLTGDTS) shows a compositional bias: polar residues. The interval 120–145 (SGSTSGSASGNLGLTGDTSTDGKGKI) is disordered.

It belongs to the FlgH family. As to quaternary structure, the basal body constitutes a major portion of the flagellar organelle and consists of four rings (L,P,S, and M) mounted on a central rod.

It localises to the cell outer membrane. Its subcellular location is the bacterial flagellum basal body. Its function is as follows. Assembles around the rod to form the L-ring and probably protects the motor/basal body from shearing forces during rotation. In Azorhizobium caulinodans (strain ATCC 43989 / DSM 5975 / JCM 20966 / LMG 6465 / NBRC 14845 / NCIMB 13405 / ORS 571), this protein is Flagellar L-ring protein.